Here is a 206-residue protein sequence, read N- to C-terminus: 7-methyl-GTP pyrophosphatase (206 aa).

D82 (proton acceptor) is an active-site residue.

This sequence belongs to the Maf family. YceF subfamily. Requires a divalent metal cation as cofactor.

It is found in the cytoplasm. It catalyses the reaction N(7)-methyl-GTP + H2O = N(7)-methyl-GMP + diphosphate + H(+). Its function is as follows. Nucleoside triphosphate pyrophosphatase that hydrolyzes 7-methyl-GTP (m(7)GTP). May have a dual role in cell division arrest and in preventing the incorporation of modified nucleotides into cellular nucleic acids. This is 7-methyl-GTP pyrophosphatase from Shewanella denitrificans (strain OS217 / ATCC BAA-1090 / DSM 15013).